Here is a 165-residue protein sequence, read N- to C-terminus: uncharacterized protein (165 aa).

The disordered stretch occupies residues 51–102; the sequence is KQAAVEPGARGGERPTGSQAGVTDTPDSAPFQRRSRAPRAREQAAQAGLNQK. A compositionally biased stretch (polar residues) spans 66–76; that stretch reads TGSQAGVTDTP.

This is an uncharacterized protein from Mus musculus (Mouse).